Here is a 118-residue protein sequence, read N- to C-terminus: Non-specific lipid-transfer protein 1 (118 aa).

An N-terminal signal peptide occupies residues 1 to 25; it reads MAGVMKLACLLLACMIVAGPITSNA. 4 disulfides stabilise this stretch: Cys-29/Cys-76, Cys-39/Cys-53, Cys-54/Cys-100, and Cys-74/Cys-114.

This sequence belongs to the plant LTP family. As to expression, expressed primarily in epidermal cells.

The protein resides in the secreted. It is found in the cell wall. Its function is as follows. Plant non-specific lipid-transfer proteins transfer phospholipids as well as galactolipids across membranes. May play a role in wax or cutin deposition in the cell walls of expanding epidermal cells and certain secretory tissues. In Arabidopsis thaliana (Mouse-ear cress), this protein is Non-specific lipid-transfer protein 1 (LTP1).